A 104-amino-acid polypeptide reads, in one-letter code: Large ribosomal subunit protein uL24 (104 aa).

It belongs to the universal ribosomal protein uL24 family. Part of the 50S ribosomal subunit.

One of two assembly initiator proteins, it binds directly to the 5'-end of the 23S rRNA, where it nucleates assembly of the 50S subunit. Its function is as follows. One of the proteins that surrounds the polypeptide exit tunnel on the outside of the subunit. The chain is Large ribosomal subunit protein uL24 from Sodalis glossinidius (strain morsitans).